A 117-amino-acid polypeptide reads, in one-letter code: S-adenosylmethionine decarboxylase proenzyme (117 aa).

Residue S63 is the Schiff-base intermediate with substrate; via pyruvic acid of the active site. The residue at position 63 (S63) is a Pyruvic acid (Ser); by autocatalysis. H68 serves as the catalytic Proton acceptor; for processing activity. C83 (proton donor; for catalytic activity) is an active-site residue.

This sequence belongs to the prokaryotic AdoMetDC family. Type 1 subfamily. As to quaternary structure, heterotetramer of two alpha and two beta chains arranged as a dimer of alpha/beta heterodimers. Requires pyruvate as cofactor. Is synthesized initially as an inactive proenzyme. Formation of the active enzyme involves a self-maturation process in which the active site pyruvoyl group is generated from an internal serine residue via an autocatalytic post-translational modification. Two non-identical subunits are generated from the proenzyme in this reaction, and the pyruvate is formed at the N-terminus of the alpha chain, which is derived from the carboxyl end of the proenzyme. The post-translation cleavage follows an unusual pathway, termed non-hydrolytic serinolysis, in which the side chain hydroxyl group of the serine supplies its oxygen atom to form the C-terminus of the beta chain, while the remainder of the serine residue undergoes an oxidative deamination to produce ammonia and the pyruvoyl group blocking the N-terminus of the alpha chain.

It catalyses the reaction S-adenosyl-L-methionine + H(+) = S-adenosyl 3-(methylsulfanyl)propylamine + CO2. Its pathway is amine and polyamine biosynthesis; S-adenosylmethioninamine biosynthesis; S-adenosylmethioninamine from S-adenosyl-L-methionine: step 1/1. Functionally, catalyzes the decarboxylation of S-adenosylmethionine to S-adenosylmethioninamine (dcAdoMet), the propylamine donor required for the synthesis of the polyamines spermine and spermidine from the diamine putrescine. This is S-adenosylmethionine decarboxylase proenzyme from Methanococcus aeolicus (strain ATCC BAA-1280 / DSM 17508 / OCM 812 / Nankai-3).